The chain runs to 285 residues: Diphthine methyl ester synthase (285 aa).

S-adenosyl-L-methionine is bound by residues Leu-9, Asp-84, Gly-87, Ser-112–Ile-113, Leu-163, Val-221, and His-246.

Belongs to the diphthine synthase family.

The protein resides in the cytoplasm. It carries out the reaction 2-[(3S)-amino-3-carboxypropyl]-L-histidyl-[translation elongation factor 2] + 4 S-adenosyl-L-methionine = diphthine methyl ester-[translation elongation factor 2] + 4 S-adenosyl-L-homocysteine + 3 H(+). Its pathway is protein modification; peptidyl-diphthamide biosynthesis. Its function is as follows. S-adenosyl-L-methionine-dependent methyltransferase that catalyzes four methylations of the modified target histidine residue in translation elongation factor 2 (EF-2), to form an intermediate called diphthine methyl ester. The four successive methylation reactions represent the second step of diphthamide biosynthesis. The protein is Diphthine methyl ester synthase (dph5) of Aspergillus fumigatus (strain ATCC MYA-4609 / CBS 101355 / FGSC A1100 / Af293) (Neosartorya fumigata).